Consider the following 227-residue polypeptide: Isopentenyl-diphosphate Delta-isomerase 1 (227 aa).

Lysine 36 is a substrate binding site. Histidine 40 and histidine 51 together coordinate Mg(2+). The Nudix hydrolase domain occupies 49–199; it reads LLHRAFSVFL…EIKITPWFQI (151 aa). Substrate contacts are provided by arginine 70 and lysine 74. Cysteine 86 serves as the catalytic Proton acceptor. Serine 87 lines the substrate pocket. Mg(2+)-binding residues include glutamate 146 and glutamate 148. The active site involves glutamate 148. Lysine 176 carries the N6-acetyllysine modification.

This sequence belongs to the IPP isomerase type 1 family. Monomer. Mg(2+) serves as cofactor.

It is found in the peroxisome. The enzyme catalyses isopentenyl diphosphate = dimethylallyl diphosphate. Its pathway is isoprenoid biosynthesis; dimethylallyl diphosphate biosynthesis; dimethylallyl diphosphate from isopentenyl diphosphate: step 1/1. Catalyzes the 1,3-allylic rearrangement of the homoallylic substrate isopentenyl (IPP) to its highly electrophilic allylic isomer, dimethylallyl diphosphate (DMAPP). The chain is Isopentenyl-diphosphate Delta-isomerase 1 (IDI1) from Bos taurus (Bovine).